Here is a 112-residue protein sequence, read N- to C-terminus: UPF0212 protein Mboo_1659 (112 aa).

The protein belongs to the UPF0212 family.

This Methanoregula boonei (strain DSM 21154 / JCM 14090 / 6A8) protein is UPF0212 protein Mboo_1659.